Here is a 172-residue protein sequence, read N- to C-terminus: MFDIGWSELLVIGVVALIAIGPKELPGVLRMVGQWMGKARKMASEFQGQFNEAMREAEMADLKKSFDDIKATANTFSRDNIMTSLQKDVDAAMTIDKIEHIDTSPVEPTTPEPPTAETLLEAETHAASISAATAVTEVGEPLAITQEIHPALPSPEPAAAIAIAPIKDAKAS.

The chain crosses the membrane as a helical span at residues 1–21; that stretch reads MFDIGWSELLVIGVVALIAIG.

Belongs to the TatB family. As to quaternary structure, the Tat system comprises two distinct complexes: a TatABC complex, containing multiple copies of TatA, TatB and TatC subunits, and a separate TatA complex, containing only TatA subunits. Substrates initially bind to the TatABC complex, which probably triggers association of the separate TatA complex to form the active translocon.

It is found in the cell inner membrane. In terms of biological role, part of the twin-arginine translocation (Tat) system that transports large folded proteins containing a characteristic twin-arginine motif in their signal peptide across membranes. Together with TatC, TatB is part of a receptor directly interacting with Tat signal peptides. TatB may form an oligomeric binding site that transiently accommodates folded Tat precursor proteins before their translocation. The polypeptide is Sec-independent protein translocase protein TatB (Rhodopseudomonas palustris (strain BisB18)).